Reading from the N-terminus, the 102-residue chain is Small ribosomal subunit protein eS24 (102 aa).

This sequence belongs to the eukaryotic ribosomal protein eS24 family.

The polypeptide is Small ribosomal subunit protein eS24 (Methanococcus maripaludis (strain C5 / ATCC BAA-1333)).